A 227-amino-acid chain; its full sequence is 2,3-bisphosphoglycerate-dependent phosphoglycerate mutase (227 aa).

Substrate-binding positions include 7–14, 20–21, arginine 59, 86–89, lysine 97, 113–114, and 182–183; these read RHGFSEWN, TG, ERHY, RR, and GN. The active-site Tele-phosphohistidine intermediate is histidine 8. The active-site Proton donor/acceptor is glutamate 86.

It belongs to the phosphoglycerate mutase family. BPG-dependent PGAM subfamily. As to quaternary structure, homodimer.

It catalyses the reaction (2R)-2-phosphoglycerate = (2R)-3-phosphoglycerate. The protein operates within carbohydrate degradation; glycolysis; pyruvate from D-glyceraldehyde 3-phosphate: step 3/5. Its function is as follows. Catalyzes the interconversion of 2-phosphoglycerate and 3-phosphoglycerate. In Haemophilus influenzae (strain ATCC 51907 / DSM 11121 / KW20 / Rd), this protein is 2,3-bisphosphoglycerate-dependent phosphoglycerate mutase.